We begin with the raw amino-acid sequence, 245 residues long: Eukaryotic translation initiation factor 6-2 (245 aa).

Belongs to the eIF-6 family. As to quaternary structure, monomer. Associates with the 60S ribosomal subunit.

The protein resides in the cytoplasm. It is found in the nucleus. It localises to the nucleolus. Its function is as follows. Binds to the 60S ribosomal subunit and prevents its association with the 40S ribosomal subunit to form the 80S initiation complex in the cytoplasm. May also be involved in ribosome biogenesis. The polypeptide is Eukaryotic translation initiation factor 6-2 (Arabidopsis thaliana (Mouse-ear cress)).